The chain runs to 345 residues: Centromere protein L (345 aa).

Phosphoserine occurs at positions 40 and 54.

Belongs to the CENP-L/IML3 family. In terms of assembly, component of the CENPA-CAD complex, composed of CENPI, CENPK, CENPL, CENPO, CENPP, CENPQ, CENPR and CENPS. The CENPA-CAD complex interacts with the CENPA-NAC complex, at least composed of CENPA, CENPC, CENPH, CENPM, CENPN, CENPT and CENPU.

It localises to the nucleus. The protein resides in the chromosome. Its subcellular location is the centromere. In terms of biological role, component of the CENPA-CAD (nucleosome distal) complex, a complex recruited to centromeres which is involved in assembly of kinetochore proteins, mitotic progression and chromosome segregation. May be involved in incorporation of newly synthesized CENPA into centromeres via its interaction with the CENPA-NAC complex. The chain is Centromere protein L (Cenpl) from Rattus norvegicus (Rat).